We begin with the raw amino-acid sequence, 313 residues long: MTHVPVLYTQAMEGLRVVENGTYLDGTFGRGGHARGVLQLLGPGGRLLVMDKDPEAIAMAERAFSCDPRVVIRHGSFALLAQLAAPQSLDGVLFDLGVSSPQLDVPERGFSFVKDGPLDMRMDPEMGESAAQWLARVSEREIADVLWTYGEEKQSRRIARAIVAYRANQPLLRTVQLAELIASVMLRTKSGACKSRIHPATRSFQGIRIHVNRELVDLEVGLEAALAALRPGGRLVVISFHSLEDRIVKQFISRHAKVPPTNRRLPEVQTFVPLLRMIGRAIKADEDELEVNPRARSAVLRVAEKLDVLEAVR.

S-adenosyl-L-methionine-binding positions include 31 to 33 (GGH), aspartate 51, phenylalanine 77, aspartate 95, and glutamine 102.

The protein belongs to the methyltransferase superfamily. RsmH family.

The protein resides in the cytoplasm. It catalyses the reaction cytidine(1402) in 16S rRNA + S-adenosyl-L-methionine = N(4)-methylcytidine(1402) in 16S rRNA + S-adenosyl-L-homocysteine + H(+). Functionally, specifically methylates the N4 position of cytidine in position 1402 (C1402) of 16S rRNA. This Xylella fastidiosa (strain 9a5c) protein is Ribosomal RNA small subunit methyltransferase H.